We begin with the raw amino-acid sequence, 762 residues long: Xaa-Pro dipeptidyl-peptidase (762 aa).

Catalysis depends on charge relay system residues Ser-349, Asp-469, and His-499.

The protein belongs to the peptidase S15 family. Homodimer.

It is found in the cytoplasm. It catalyses the reaction Hydrolyzes Xaa-Pro-|- bonds to release unblocked, N-terminal dipeptides from substrates including Ala-Pro-|-p-nitroanilide and (sequentially) Tyr-Pro-|-Phe-Pro-|-Gly-Pro-|-Ile.. Functionally, removes N-terminal dipeptides sequentially from polypeptides having unsubstituted N-termini provided that the penultimate residue is proline. This chain is Xaa-Pro dipeptidyl-peptidase, found in Streptococcus sanguinis (strain SK36).